The chain runs to 301 residues: Formylmethanofuran--tetrahydromethanopterin formyltransferase (301 aa).

The protein belongs to the FTR family. As to quaternary structure, homotetramer.

It is found in the cytoplasm. The catalysed reaction is N-formylmethanofuran + 5,6,7,8-tetrahydromethanopterin + H(+) = N(5)-formyl-5,6,7,8-tetrahydromethanopterin + methanofuran. It participates in one-carbon metabolism; methanogenesis from CO(2); 5,10-methenyl-5,6,7,8-tetrahydromethanopterin from CO(2): step 2/3. In terms of biological role, catalyzes the reversible transfer of a formyl group from formylmethanofuran (formyl-MFR) to tetrahydromethanopterin (H(4)MPT) to produce 5-formyl tetrahydromethanopterin (5-formyl-H(4)MPT) and methanofuran (MFR). This is Formylmethanofuran--tetrahydromethanopterin formyltransferase from Methanocaldococcus jannaschii (strain ATCC 43067 / DSM 2661 / JAL-1 / JCM 10045 / NBRC 100440) (Methanococcus jannaschii).